Consider the following 131-residue polypeptide: MDYLWIMIGSALGGAARFWVTGFVAEQTGGIFPWGTVLINVSGSFLIGFFGSLTGAEGRFVVGESARLFVMIGLCGGFTTFSSFSLQTLNLMRQGEMIRAGGNIALSVVFCLLAVWLGHVVAVAINQMKGA.

4 helical membrane-spanning segments follow: residues 4-24, 30-50, 68-88, and 104-124; these read LWIM…TGFV, GIFP…IGFF, LFVM…SLQT, and IALS…VAVA. Na(+) is bound by residues glycine 76 and threonine 79.

It belongs to the fluoride channel Fluc/FEX (TC 1.A.43) family.

It localises to the cell inner membrane. It carries out the reaction fluoride(in) = fluoride(out). Its activity is regulated as follows. Na(+) is not transported, but it plays an essential structural role and its presence is essential for fluoride channel function. In terms of biological role, fluoride-specific ion channel. Important for reducing fluoride concentration in the cell, thus reducing its toxicity. In Methylocella silvestris (strain DSM 15510 / CIP 108128 / LMG 27833 / NCIMB 13906 / BL2), this protein is Fluoride-specific ion channel FluC.